A 489-amino-acid chain; its full sequence is Dihydropyrimidinase 1 (489 aa).

Zn(2+)-binding residues include histidine 61, histidine 63, and lysine 156. Lysine 156 bears the N6-carboxylysine mark. Substrate is bound at residue tyrosine 161. Histidine 189 and histidine 245 together coordinate Zn(2+). Serine 295 is a substrate binding site. Aspartate 323 is a binding site for Zn(2+). Asparagine 344 serves as a coordination point for substrate.

This sequence belongs to the metallo-dependent hydrolases superfamily. Hydantoinase/dihydropyrimidinase family. In terms of assembly, homotetramer. The cofactor is Zn(2+). In terms of processing, carboxylation allows a single lysine to coordinate two zinc ions. In terms of tissue distribution, in L1-L2 larvae, expressed in body hypodermal cells, hemidesmosomes and in a neuronal cell between the pharynx and ring neuropil. In adults, expression is seen in body hypodermal cells and pharynx.

The protein resides in the nucleus. The enzyme catalyses 5,6-dihydrouracil + H2O = 3-(carbamoylamino)propanoate + H(+). This Caenorhabditis elegans protein is Dihydropyrimidinase 1 (dhp-1).